A 1181-amino-acid polypeptide reads, in one-letter code: Pesticidal crystal protein Cry1Ae (1181 aa).

This sequence belongs to the delta endotoxin family.

In terms of biological role, promotes colloidosmotic lysis by binding to the midgut epithelial cells of many lepidopteran larvae. The chain is Pesticidal crystal protein Cry1Ae (cry1Ae) from Bacillus thuringiensis subsp. alesti.